The sequence spans 1545 residues: ATP-binding cassette sub-family C member 9 (1545 aa).

Topologically, residues 1–30 (MSLSFCGNNISSYNIYHGVLQNPCFVDALN) are extracellular. The N-linked (GlcNAc...) asparagine glycan is linked to Asn9. Residues 31–51 (LVPHVFLLFITFPILFIGWGS) form a helical membrane-spanning segment. At 52–72 (QSSKVQIHHNTWLHFPGHNLR) the chain is on the cytoplasmic side. The helical transmembrane segment at 73-93 (WILTFALLFVHVCEIAEGIVS) threads the bilayer. Residues 94 to 101 (DSQRASRH) lie on the Extracellular side of the membrane. A helical transmembrane segment spans residues 102–122 (LHLFMPAVMGFVATTTSIVYY). At 123-132 (HNIETSNFPK) the chain is on the cytoplasmic side. The helical transmembrane segment at 133–153 (LLLALFLYWVMAFITKTIKLV) threads the bilayer. Residues 154-167 (KYWQLGWGMSDLRF) are Extracellular-facing. Residues 168–188 (CITGVMVILNGLLMAVEINVI) traverse the membrane as a helical segment. At 189-301 (RVRRYVFFMN…AFGRPILLSS (113 aa)) the chain is on the cytoplasmic side. The ABC transmembrane type-1 1 domain occupies 297-594 (ILLSSTFRYL…LSTVVRFAVK (298 aa)). A helical membrane pass occupies residues 302 to 322 (TFRYLADLLGFAGPLCISGIV). Topologically, residues 323–347 (QRVNEPKNNTTRFSETLSSKEFLEN) are extracellular. N-linked (GlcNAc...) asparagine glycans are attached at residues Asn330 and Asn331. A helical transmembrane segment spans residues 348–368 (AHVLAVLLFLALILQRTFLQA). The Cytoplasmic segment spans residues 369–420 (SYYVTIETGINLRGALLAMIYNKILRLSTSNLSMGEMTLGQINNLVAIETNQ). The chain crosses the membrane as a helical span at residues 421–441 (LMWFLFLCPNLWAMPVQIIMG). The Extracellular portion of the chain corresponds to 442–452 (VILLYNLLGSS). The chain crosses the membrane as a helical span at residues 453–473 (ALVGAAVIVLLAPIQYFIATK). Topologically, residues 474–528 (LAEAQKSTLDYSTERLKKTNEILKGIKLLKLYAWEHIFCKSVEETRMKELSSLKT) are cytoplasmic. A helical transmembrane segment spans residues 529–549 (FALYTSLSIFMNAAIPIAAVL). At 550–568 (ATFVTHAYASGNNLKPAEA) the chain is on the extracellular side. A helical transmembrane segment spans residues 569-589 (FASLSLFHILVTPLFLLSTVV). Residues 590–986 (RFAVKAIISV…TCWWYLTSGG (397 aa)) lie on the Cytoplasmic side of the membrane. The ABC transporter 1 domain maps to 668 to 908 (IKVTNGYFSW…DVELYEHWKT (241 aa)). Position 701–708 (701–708 (GQVGCGKS)) interacts with ATP. Positions 940–963 (REAKAQMEDEDEEEEEEEDEDDNM) are disordered. A compositionally biased stretch (acidic residues) spans 947-962 (EDEDEEEEEEEDEDDN). A helical transmembrane segment spans residues 987 to 1007 (FFLLFLMIFSKLLKHSVIVAI). Positions 990–1270 (LFLMIFSKLL…VVRNLADLEV (281 aa)) constitute an ABC transmembrane type-1 2 domain. Topologically, residues 1008 to 1030 (DYWLATWTSEYSINDPGKADQTF) are extracellular. Residues 1031–1051 (YVAGFSILCGAGIFLCLVTSL) form a helical membrane-spanning segment. The Cytoplasmic portion of the chain corresponds to 1052–1123 (TVEWMGLTAA…TLLCLSAIGM (72 aa)). A helical membrane pass occupies residues 1124-1144 (ISYATPVFLIALAPLGVAFYF). Topologically, residues 1145-1241 (IQKYFRVASK…IASISGSSNS (97 aa)) are extracellular. Residues 1242–1262 (GLVGLGLLYALTITNYLNWVV) form a helical membrane-spanning segment. Topologically, residues 1263–1545 (RNLADLEVQM…LFSTLVMTNK (283 aa)) are cytoplasmic. The region spanning 1308 to 1542 (IKIHDLCVRY…KNGLFSTLVM (235 aa)) is the ABC transporter 2 domain. Residue 1342 to 1349 (GRTGSGKS) coordinates ATP.

Belongs to the ABC transporter superfamily. ABCC family. Conjugate transporter (TC 3.A.1.208) subfamily. As to quaternary structure, interacts with KCNJ11. Interacts with KCNJ8. In terms of tissue distribution, expressed at high levels in heart, skeletal muscle and ovary. Moderate levels are found in brain, tongue and pancreatic islets. Low levels are found in lung, testis and adrenal gland. Expressed at very low levels in stomach, colon, thyroid and pituitary.

Its subcellular location is the membrane. In terms of biological role, subunit of ATP-sensitive potassium channels (KATP). Can form cardiac and smooth muscle-type KATP channels with KCNJ11. KCNJ11 forms the channel pore while ABCC9 is required for activation and regulation. Can form a sulfonylurea-sensitive but ATP-insensitive potassium channel with KCNJ8. The polypeptide is ATP-binding cassette sub-family C member 9 (Abcc9) (Rattus norvegicus (Rat)).